A 150-amino-acid polypeptide reads, in one-letter code: Large ribosomal subunit protein bL9 (150 aa).

The protein belongs to the bacterial ribosomal protein bL9 family.

Binds to the 23S rRNA. In Photorhabdus laumondii subsp. laumondii (strain DSM 15139 / CIP 105565 / TT01) (Photorhabdus luminescens subsp. laumondii), this protein is Large ribosomal subunit protein bL9.